The following is a 108-amino-acid chain: Large ribosomal subunit protein uL24 (108 aa).

Residues 46–65 (RHTRVQQSSRGSQSGGIVTQ) form a disordered region. A compositionally biased stretch (low complexity) spans 51-61 (QQSSRGSQSGG).

This sequence belongs to the universal ribosomal protein uL24 family. Part of the 50S ribosomal subunit.

In terms of biological role, one of two assembly initiator proteins, it binds directly to the 5'-end of the 23S rRNA, where it nucleates assembly of the 50S subunit. Functionally, one of the proteins that surrounds the polypeptide exit tunnel on the outside of the subunit. This Parafrankia sp. (strain EAN1pec) protein is Large ribosomal subunit protein uL24.